The sequence spans 839 residues: Protein translocase subunit SecA (839 aa).

ATP is bound by residues Gln-86, 104 to 108 (GEGKT), and Asp-493. The disordered stretch occupies residues 794–839 (GIDMDNLQTSGPSDRPDPETSGDADPKNRAQRRAQEQERKRQNKKQ). Residues 807–833 (DRPDPETSGDADPKNRAQRRAQEQERK) show a composition bias toward basic and acidic residues.

It belongs to the SecA family. In terms of assembly, monomer and homodimer. Part of the essential Sec protein translocation apparatus which comprises SecA, SecYEG and auxiliary proteins SecDF. Other proteins may also be involved.

It localises to the cell membrane. Its subcellular location is the cytoplasm. It carries out the reaction ATP + H2O + cellular proteinSide 1 = ADP + phosphate + cellular proteinSide 2.. Part of the Sec protein translocase complex. Interacts with the SecYEG preprotein conducting channel. Has a central role in coupling the hydrolysis of ATP to the transfer of proteins into and across the cell membrane, serving as an ATP-driven molecular motor driving the stepwise translocation of polypeptide chains across the membrane. The sequence is that of Protein translocase subunit SecA from Brevibacillus brevis (strain 47 / JCM 6285 / NBRC 100599).